The chain runs to 686 residues: Catalase-2 (686 aa).

Positions 1–27 (MSDDQNKRVNEHSKDEQLEQYRTDNSG) are enriched in basic and acidic residues. Residues 1 to 43 (MSDDQNKRVNEHSKDEQLEQYRTDNSGKKMTTNQGLRVSEDEH) form a disordered region. Active-site residues include H78 and N151. A heme-binding site is contributed by Y365.

Belongs to the catalase family. HPII subfamily. It depends on heme as a cofactor.

The enzyme catalyses 2 H2O2 = O2 + 2 H2O. Functionally, decomposes hydrogen peroxide into water and oxygen; serves to protect cells from the toxic effects of hydrogen peroxide. Involved in sporulation. The polypeptide is Catalase-2 (katE) (Bacillus subtilis (strain 168)).